A 263-amino-acid chain; its full sequence is Putative protein JayE (263 aa).

It belongs to the Mu gp47/PBSX XkdT family.

This is Putative protein JayE (jayE) from Escherichia coli (strain K12).